We begin with the raw amino-acid sequence, 363 residues long: Phosphoserine aminotransferase (363 aa).

An L-glutamate-binding site is contributed by R42. Pyridoxal 5'-phosphate contacts are provided by residues 76–77 (GR), W102, T156, D175, and Q198. K199 bears the N6-(pyridoxal phosphate)lysine mark. 240-241 (NT) contributes to the pyridoxal 5'-phosphate binding site.

It belongs to the class-V pyridoxal-phosphate-dependent aminotransferase family. SerC subfamily. As to quaternary structure, homodimer. Pyridoxal 5'-phosphate is required as a cofactor.

Its subcellular location is the cytoplasm. The enzyme catalyses O-phospho-L-serine + 2-oxoglutarate = 3-phosphooxypyruvate + L-glutamate. It catalyses the reaction 4-(phosphooxy)-L-threonine + 2-oxoglutarate = (R)-3-hydroxy-2-oxo-4-phosphooxybutanoate + L-glutamate. It functions in the pathway amino-acid biosynthesis; L-serine biosynthesis; L-serine from 3-phospho-D-glycerate: step 2/3. The protein operates within cofactor biosynthesis; pyridoxine 5'-phosphate biosynthesis; pyridoxine 5'-phosphate from D-erythrose 4-phosphate: step 3/5. Its function is as follows. Catalyzes the reversible conversion of 3-phosphohydroxypyruvate to phosphoserine and of 3-hydroxy-2-oxo-4-phosphonooxybutanoate to phosphohydroxythreonine. The polypeptide is Phosphoserine aminotransferase (Shewanella sp. (strain MR-4)).